The primary structure comprises 643 residues: Long-chain fatty acid transport protein 4 (643 aa).

2 consecutive transmembrane segments (helical) span residues 20–42 (LPWT…WRFI) and 139–156 (FVGL…AALI). 243–254 (YIYTSGTTGLPK) is an AMP binding site.

Belongs to the ATP-dependent AMP-binding enzyme family. Expressed at highest levels in brain, testis, colon and kidney. Expressed at medium levels in heart and liver, small intestine and stomach. Expressed at low levels in peripheral leukocytes, bone marrow, skeletal muscle and aorta. Expressed in adipose tissue. Expressed in brain gray matter.

Its subcellular location is the endoplasmic reticulum membrane. The enzyme catalyses a fatty acid(in) = a fatty acid(out). It carries out the reaction (9Z,12Z)-octadecadienoate(out) = (9Z,12Z)-octadecadienoate(in). The catalysed reaction is (9Z)-octadecenoate(out) = (9Z)-octadecenoate(in). It catalyses the reaction hexadecanoate(out) = hexadecanoate(in). The enzyme catalyses a long-chain fatty acid + ATP + CoA = a long-chain fatty acyl-CoA + AMP + diphosphate. It carries out the reaction hexadecanoate + ATP + CoA = hexadecanoyl-CoA + AMP + diphosphate. The catalysed reaction is (E)-hexadec-2-enoate + ATP + CoA = (2E)-hexadecenoyl-CoA + AMP + diphosphate. It catalyses the reaction (9Z)-octadecenoate + ATP + CoA = (9Z)-octadecenoyl-CoA + AMP + diphosphate. The enzyme catalyses (5Z,8Z,11Z,14Z)-eicosatetraenoate + ATP + CoA = (5Z,8Z,11Z,14Z)-eicosatetraenoyl-CoA + AMP + diphosphate. It carries out the reaction a very long-chain fatty acid + ATP + CoA = a very long-chain fatty acyl-CoA + AMP + diphosphate. The catalysed reaction is tetracosanoate + ATP + CoA = tetracosanoyl-CoA + AMP + diphosphate. Functionally, mediates the levels of long-chain fatty acids (LCFA) in the cell by facilitating their transport across cell membranes. Appears to be the principal fatty acid transporter in small intestinal enterocytes. Also functions as an acyl-CoA ligase catalyzing the ATP-dependent formation of fatty acyl-CoA using LCFA and very-long-chain fatty acids (VLCFA) as substrates, which prevents fatty acid efflux from cells and might drive more fatty acid uptake. Plays a role in the formation of the epidermal barrier. Required for fat absorption in early embryogenesis. Probably involved in fatty acid transport across the blood barrier. Indirectly inhibits RPE65 via substrate competition and via production of VLCFA derivatives like lignoceroyl-CoA. Prevents light-induced degeneration of rods and cones. The chain is Long-chain fatty acid transport protein 4 from Homo sapiens (Human).